Reading from the N-terminus, the 158-residue chain is Ribonuclease H (158 aa).

The 142-residue stretch at 3-144 folds into the RNase H type-1 domain; the sequence is ELKLIHIFTD…CDQLARAAAE (142 aa). 4 residues coordinate Mg(2+): D12, E50, D72, and D136. The interval 137–158 is disordered; the sequence is QLARAAAEASPTQVDEGYQPES.

Belongs to the RNase H family. Monomer. The cofactor is Mg(2+).

It is found in the cytoplasm. It catalyses the reaction Endonucleolytic cleavage to 5'-phosphomonoester.. Endonuclease that specifically degrades the RNA of RNA-DNA hybrids. This is Ribonuclease H from Shewanella sp. (strain ANA-3).